The chain runs to 349 residues: UDP-3-O-acylglucosamine N-acyltransferase (349 aa).

Histidine 246 functions as the Proton acceptor in the catalytic mechanism.

It belongs to the transferase hexapeptide repeat family. LpxD subfamily. In terms of assembly, homotrimer.

It carries out the reaction a UDP-3-O-[(3R)-3-hydroxyacyl]-alpha-D-glucosamine + a (3R)-hydroxyacyl-[ACP] = a UDP-2-N,3-O-bis[(3R)-3-hydroxyacyl]-alpha-D-glucosamine + holo-[ACP] + H(+). It participates in bacterial outer membrane biogenesis; LPS lipid A biosynthesis. Catalyzes the N-acylation of UDP-3-O-acylglucosamine using 3-hydroxyacyl-ACP as the acyl donor. Is involved in the biosynthesis of lipid A, a phosphorylated glycolipid that anchors the lipopolysaccharide to the outer membrane of the cell. The polypeptide is UDP-3-O-acylglucosamine N-acyltransferase (Trichormus variabilis (strain ATCC 29413 / PCC 7937) (Anabaena variabilis)).